A 172-amino-acid polypeptide reads, in one-letter code: RNA pyrophosphohydrolase (172 aa).

The region spanning Gly-6–Lys-149 is the Nudix hydrolase domain. A Nudix box motif is present at residues Gly-38–Gly-59.

Belongs to the Nudix hydrolase family. RppH subfamily. Requires a divalent metal cation as cofactor.

Accelerates the degradation of transcripts by removing pyrophosphate from the 5'-end of triphosphorylated RNA, leading to a more labile monophosphorylated state that can stimulate subsequent ribonuclease cleavage. The chain is RNA pyrophosphohydrolase from Vibrio atlanticus (strain LGP32) (Vibrio splendidus (strain Mel32)).